Here is an 88-residue protein sequence, read N- to C-terminus: Small ribosomal subunit protein eS21 (88 aa).

This sequence belongs to the eukaryotic ribosomal protein eS21 family. Component of the small ribosomal subunit. Mature ribosomes consist of a small (40S) and a large (60S) subunit. The 40S subunit contains about 33 different proteins and 1 molecule of RNA (18S). The 60S subunit contains about 49 different proteins and 3 molecules of RNA (25S, 5.8S and 5S).

It is found in the cytoplasm. Required for the processing of the 20S rRNA-precursor to mature 18S rRNA in a late step of the maturation of 40S ribosomal subunits. Has a physiological role leading to 18S rRNA stability. The polypeptide is Small ribosomal subunit protein eS21 (rps21) (Aspergillus fumigatus (strain ATCC MYA-4609 / CBS 101355 / FGSC A1100 / Af293) (Neosartorya fumigata)).